Consider the following 248-residue polypeptide: Type II restriction enzyme XhoI (248 aa).

Belongs to the XhoI type II restriction endonuclease family.

It carries out the reaction Endonucleolytic cleavage of DNA to give specific double-stranded fragments with terminal 5'-phosphates.. Its function is as follows. A P subtype restriction enzyme that recognizes the double-stranded sequence 5'-CTCGAG-3' and cleaves after C-1. In Xanthomonas vasicola, this protein is Type II restriction enzyme XhoI.